The sequence spans 1374 residues: DNA-directed RNA polymerase subunit beta (1374 aa).

It belongs to the RNA polymerase beta chain family. In terms of assembly, the RNAP catalytic core consists of 2 alpha, 1 beta, 1 beta' and 1 omega subunit. When a sigma factor is associated with the core the holoenzyme is formed, which can initiate transcription.

It catalyses the reaction RNA(n) + a ribonucleoside 5'-triphosphate = RNA(n+1) + diphosphate. Functionally, DNA-dependent RNA polymerase catalyzes the transcription of DNA into RNA using the four ribonucleoside triphosphates as substrates. This is DNA-directed RNA polymerase subunit beta from Paracidovorax citrulli (strain AAC00-1) (Acidovorax citrulli).